The sequence spans 204 residues: Large ribosomal subunit protein uL4 (204 aa).

The disordered stretch occupies residues 49–75 (TKGRSDVSGGGKKPWRQKGRGGARAGS).

This sequence belongs to the universal ribosomal protein uL4 family. In terms of assembly, part of the 50S ribosomal subunit.

One of the primary rRNA binding proteins, this protein initially binds near the 5'-end of the 23S rRNA. It is important during the early stages of 50S assembly. It makes multiple contacts with different domains of the 23S rRNA in the assembled 50S subunit and ribosome. Functionally, forms part of the polypeptide exit tunnel. The chain is Large ribosomal subunit protein uL4 from Campylobacter jejuni subsp. doylei (strain ATCC BAA-1458 / RM4099 / 269.97).